The sequence spans 480 residues: RNA-binding protein 42 (480 aa).

The interval 1 to 30 (MAGAGPAPGLPGAGGPVVPGPGAGIPGKSG) is disordered. Alanine 2 carries the post-translational modification N-acetylalanine. A compositionally biased stretch (gly residues) spans 11–27 (PGAGGPVVPGPGAGIPG). Serine 135 bears the Phosphoserine mark. An asymmetric dimethylarginine mark is found at arginine 153, arginine 158, arginine 168, and arginine 181. A necessary for interaction with HNRNPK region spans residues 236–480 (ELGLGLGLGL…QKEKKKLGLR (245 aa)). A disordered region spans residues 319–356 (SLRPRPRPPRPEPPPGLMALEVPEPLGEDKKKGKPEKL). Over residues 345-356 (GEDKKKGKPEKL) the composition is skewed to basic and acidic residues. Residues 381–459 (FRIFCGDLGN…RPIKLRKSMW (79 aa)) form the RRM domain.

Belongs to the RRM RBM42 family. Interacts with HNRNPK.

The protein localises to the nucleus. The protein resides in the cytoplasm. In terms of biological role, binds (via the RRM domain) to the 3'-untranslated region (UTR) of CDKN1A mRNA. This is RNA-binding protein 42 (RBM42) from Homo sapiens (Human).